Consider the following 683-residue polypeptide: Kinesin-like protein KIF2B (683 aa).

A Phosphothreonine; by PLK1 modification is found at threonine 125. A coiled-coil region spans residues 141–176 (LMTQRKSACLREIEKLQKQRERRRRLHREIRAQRAR). At serine 204 the chain carries Phosphoserine; by PLK1. A Kinesin motor domain is found at 213–543 (RICVCVRKRP…LRYANRVKEI (331 aa)). 303–310 (GQTGSGKT) provides a ligand contact to ATP. Residues 640-672 (QLLSILEKKIDILTEIRRKLKLLQADIQKENRH) adopt a coiled-coil conformation.

The protein belongs to the TRAFAC class myosin-kinesin ATPase superfamily. Kinesin family. MCAK/KIF2 subfamily. Post-translationally, phosphorylation at Thr-125 by PLK1 is required for activity in the correction of kinetochore-microtubules attachment errors, while phosphorylation at Ser-204 also by PLK1 is required for the kinetochore localization and activity in prometaphase.

It localises to the cytoplasm. Its subcellular location is the cytoskeleton. It is found in the microtubule organizing center. The protein localises to the centrosome. The protein resides in the spindle. It localises to the chromosome. Its subcellular location is the centromere. It is found in the kinetochore. Plus end-directed microtubule-dependent motor required for spindle assembly and chromosome movement during mitosis. Has microtubule depolymerization activity. Plays a role in chromosome congression. The protein is Kinesin-like protein KIF2B of Bos taurus (Bovine).